A 227-amino-acid polypeptide reads, in one-letter code: 2-C-methyl-D-erythritol 4-phosphate cytidylyltransferase (227 aa).

Belongs to the IspD/TarI cytidylyltransferase family. IspD subfamily.

The catalysed reaction is 2-C-methyl-D-erythritol 4-phosphate + CTP + H(+) = 4-CDP-2-C-methyl-D-erythritol + diphosphate. The protein operates within isoprenoid biosynthesis; isopentenyl diphosphate biosynthesis via DXP pathway; isopentenyl diphosphate from 1-deoxy-D-xylulose 5-phosphate: step 2/6. Its function is as follows. Catalyzes the formation of 4-diphosphocytidyl-2-C-methyl-D-erythritol from CTP and 2-C-methyl-D-erythritol 4-phosphate (MEP). The protein is 2-C-methyl-D-erythritol 4-phosphate cytidylyltransferase of Tolumonas auensis (strain DSM 9187 / NBRC 110442 / TA 4).